The chain runs to 346 residues: Partitioning defective 6 homolog alpha (346 aa).

The segment at 1–116 (MARPQRTPAR…SNSLQRRKKG (116 aa)) is interaction with PRKCI and PRKCZ. The 81-residue stretch at 15–95 (IVEVKSKFDA…PPLRLLVQKR (81 aa)) folds into the PB1 domain. Positions 126–253 (RTRPPLLISL…VTVKPANQRN (128 aa)) are interaction with PARD3 and CDC42. A Pseudo-CRIB domain is found at 133–150 (ISLPQDFRQVSSVIDVDL). A PDZ domain is found at 157–250 (RVRLHKHGSD…NLIVTVKPAN (94 aa)). The interval 257-346 (RGASGRLTGP…IRGDGSGFSL (90 aa)) is disordered. Residues Ser278 and Ser345 each carry the phosphoserine modification.

It belongs to the PAR6 family. Interacts with MAP2K5. Interacts with PARD3. Interacts with GTP-bound forms of CDC42, RHOQ/TC10 and RAC1. Interacts with the N-terminal part of PRKCI and PRKCZ. Part of a complex with PARD3, CDC42 or RAC1 and PRKCI or PRKCZ. Part of a complex with LLGL1 and PRKCI. Interacts with human T-cell leukemia virus type I TAX protein. Interacts with PALS1 and CRB3. Interacts with TGFBR1; involved in TGF-beta induced epithelial to mesenchymal transition. Interacts with ECT2 ('Thr-359' phosphorylated form) and PRKCI. Interacts with DCTN1 and PCM1. In terms of processing, phosphorylated by the TGF-beta receptor. Ubiquitinated by the SCF(FBXO31) complex, leading to its proteasomal degradation. In terms of tissue distribution, expressed in pancreas, skeletal muscle, brain and heart. Weakly expressed in kidney and placenta.

The protein resides in the cytoplasm. It is found in the cell membrane. The protein localises to the cell projection. It localises to the ruffle. Its subcellular location is the cell junction. The protein resides in the tight junction. It is found in the cytoskeleton. The protein localises to the microtubule organizing center. It localises to the centrosome. Its subcellular location is the centriolar satellite. In terms of biological role, adapter protein involved in asymmetrical cell division and cell polarization processes. Probably involved in the formation of epithelial tight junctions. Association with PARD3 may prevent the interaction of PARD3 with F11R/JAM1, thereby preventing tight junction assembly. The PARD6-PARD3 complex links GTP-bound Rho small GTPases to atypical protein kinase C proteins. Regulates centrosome organization and function. Essential for the centrosomal recruitment of key proteins that control centrosomal microtubule organization. This chain is Partitioning defective 6 homolog alpha (PARD6A), found in Homo sapiens (Human).